A 336-amino-acid polypeptide reads, in one-letter code: Glycerol-3-phosphate dehydrogenase [NAD(P)+] (336 aa).

NADPH is bound by residues S14, W15, R35, R36, and K109. Positions 109 and 139 each coordinate sn-glycerol 3-phosphate. Residue A143 coordinates NADPH. K194, D247, S257, R258, and N259 together coordinate sn-glycerol 3-phosphate. Catalysis depends on K194, which acts as the Proton acceptor. R258 serves as a coordination point for NADPH. An NADPH-binding site is contributed by E284.

The protein belongs to the NAD-dependent glycerol-3-phosphate dehydrogenase family.

The protein localises to the cytoplasm. The enzyme catalyses sn-glycerol 3-phosphate + NAD(+) = dihydroxyacetone phosphate + NADH + H(+). It carries out the reaction sn-glycerol 3-phosphate + NADP(+) = dihydroxyacetone phosphate + NADPH + H(+). Its pathway is membrane lipid metabolism; glycerophospholipid metabolism. Functionally, catalyzes the reduction of the glycolytic intermediate dihydroxyacetone phosphate (DHAP) to sn-glycerol 3-phosphate (G3P), the key precursor for phospholipid synthesis. The chain is Glycerol-3-phosphate dehydrogenase [NAD(P)+] from Streptomyces coelicolor (strain ATCC BAA-471 / A3(2) / M145).